The following is a 280-amino-acid chain: Phosphatidylglycerol--prolipoprotein diacylglyceryl transferase (280 aa).

3 consecutive transmembrane segments (helical) span residues Ile15 to Leu35, Phe60 to Phe80, and Ile90 to Phe110. Arg138 lines the a 1,2-diacyl-sn-glycero-3-phospho-(1'-sn-glycerol) pocket. The next 2 helical transmembrane spans lie at Met217–Leu237 and Gly257–Val277.

This sequence belongs to the Lgt family.

The protein resides in the cell membrane. It catalyses the reaction L-cysteinyl-[prolipoprotein] + a 1,2-diacyl-sn-glycero-3-phospho-(1'-sn-glycerol) = an S-1,2-diacyl-sn-glyceryl-L-cysteinyl-[prolipoprotein] + sn-glycerol 1-phosphate + H(+). The protein operates within protein modification; lipoprotein biosynthesis (diacylglyceryl transfer). In terms of biological role, catalyzes the transfer of the diacylglyceryl group from phosphatidylglycerol to the sulfhydryl group of the N-terminal cysteine of a prolipoprotein, the first step in the formation of mature lipoproteins. This chain is Phosphatidylglycerol--prolipoprotein diacylglyceryl transferase, found in Buchnera aphidicola subsp. Baizongia pistaciae (strain Bp).